Here is a 418-residue protein sequence, read N- to C-terminus: Thyroxine-binding globulin (418 aa).

The signal sequence occupies residues 1 to 20 (MSMFFYLFLLVLGLQATIHC). Asn-24, Asn-39, Asn-102, Asn-168, Asn-227, and Asn-256 each carry an N-linked (GlcNAc...) asparagine glycan. The thyroxine site is built by Asn-296 and Lys-401.

This sequence belongs to the serpin family. As to expression, expressed by the liver and secreted in plasma.

It is found in the secreted. In terms of biological role, major thyroid hormone transport protein in serum. This Rattus norvegicus (Rat) protein is Thyroxine-binding globulin (Serpina7).